A 227-amino-acid polypeptide reads, in one-letter code: Aspartyl protease inhibitor (227 aa).

The signal sequence occupies residues 1 to 15; sequence MKLVVLCVLCGIALA. Residues 88–109 are compositionally biased toward basic and acidic residues; it reads SLKSRMAGKKEKAVTPKEEDLP. Residues 88 to 116 are disordered; that stretch reads SLKSRMAGKKEKAVTPKEEDLPKAPQKPS. An intrachain disulfide couples C131 to C223.

It belongs to the protease inhibitor I33 family.

It is found in the secreted. In terms of biological role, aspartyl protease inhibitor. This Ostertagia ostertagi (Brown stomach worm) protein is Aspartyl protease inhibitor (API).